The sequence spans 456 residues: MYNCAIILAAGEGKRMKSSKPKVLHKICGKEMINVVIDVVKKAQIKDINVVIGKNSEKVKKATEVKNTSYSFQDKQLGTGHAVLCASDFLKNKRGIVAVFTGDSPLIKENTIKNMLDFHEAGGYGATILTSIVQNPFGYGRIIREEDEQVLKIVEHKDCLQEELQVKEINSGMYCFDIESLIESLGKIRNNNAQGEYYLTDVIEILKQEGKKIGALPIPFEETMGVNSRVQLAEAEKIMRNRINKIHMENGVTLIDHNNTYIDLDIQIGKDTIIYPGNVFQGDTVIGENCIFYPNSRIQSSVIKDNVTVENSVVLESTIGENTSVGPFAYIRPETTIGKSVKIGDFVEVKKSTIGDNTKVSHLTYIGDAEVGSKCNFGCGTVVVNYNGKNKNKTLIGNNSFIGCNTNLVSPVKVNDNTYIAAGSTITDEVPEGALAIARARQVNKKSWVYKKGLKK.

A pyrophosphorylase region spans residues 1 to 229 (MYNCAIILAA…FEETMGVNSR (229 aa)). Residues 8-11 (LAAG), lysine 22, glutamine 73, and 78-79 (GT) contribute to the UDP-N-acetyl-alpha-D-glucosamine site. Aspartate 103 serves as a coordination point for Mg(2+). Residues glycine 140, glutamate 155, asparagine 170, and asparagine 227 each coordinate UDP-N-acetyl-alpha-D-glucosamine. Asparagine 227 serves as a coordination point for Mg(2+). The segment at 230–250 (VQLAEAEKIMRNRINKIHMEN) is linker. Positions 251-456 (GVTLIDHNNT…SWVYKKGLKK (206 aa)) are N-acetyltransferase. The UDP-N-acetyl-alpha-D-glucosamine site is built by arginine 332 and lysine 350. Histidine 362 (proton acceptor) is an active-site residue. UDP-N-acetyl-alpha-D-glucosamine is bound by residues tyrosine 365 and asparagine 376. Residues 385 to 386 (NY), alanine 422, and arginine 439 contribute to the acetyl-CoA site.

The protein in the N-terminal section; belongs to the N-acetylglucosamine-1-phosphate uridyltransferase family. It in the C-terminal section; belongs to the transferase hexapeptide repeat family. Homotrimer. Requires Mg(2+) as cofactor.

Its subcellular location is the cytoplasm. The catalysed reaction is alpha-D-glucosamine 1-phosphate + acetyl-CoA = N-acetyl-alpha-D-glucosamine 1-phosphate + CoA + H(+). It carries out the reaction N-acetyl-alpha-D-glucosamine 1-phosphate + UTP + H(+) = UDP-N-acetyl-alpha-D-glucosamine + diphosphate. It functions in the pathway nucleotide-sugar biosynthesis; UDP-N-acetyl-alpha-D-glucosamine biosynthesis; N-acetyl-alpha-D-glucosamine 1-phosphate from alpha-D-glucosamine 6-phosphate (route II): step 2/2. Its pathway is nucleotide-sugar biosynthesis; UDP-N-acetyl-alpha-D-glucosamine biosynthesis; UDP-N-acetyl-alpha-D-glucosamine from N-acetyl-alpha-D-glucosamine 1-phosphate: step 1/1. It participates in bacterial outer membrane biogenesis; LPS lipid A biosynthesis. Catalyzes the last two sequential reactions in the de novo biosynthetic pathway for UDP-N-acetylglucosamine (UDP-GlcNAc). The C-terminal domain catalyzes the transfer of acetyl group from acetyl coenzyme A to glucosamine-1-phosphate (GlcN-1-P) to produce N-acetylglucosamine-1-phosphate (GlcNAc-1-P), which is converted into UDP-GlcNAc by the transfer of uridine 5-monophosphate (from uridine 5-triphosphate), a reaction catalyzed by the N-terminal domain. The chain is Bifunctional protein GlmU from Clostridium kluyveri (strain NBRC 12016).